We begin with the raw amino-acid sequence, 449 residues long: Glycine--tRNA ligase (449 aa).

Substrate is bound by residues arginine 100 and glutamate 158. ATP-binding positions include 190-192, 200-205, 275-276, and 319-322; these read RNE, FRVREF, EL, and GIER. 205-209 is a substrate binding site; sequence FEQFE. 315 to 319 lines the substrate pocket; that stretch reads EPSVG.

It belongs to the class-II aminoacyl-tRNA synthetase family. Homodimer.

The protein localises to the cytoplasm. It catalyses the reaction tRNA(Gly) + glycine + ATP = glycyl-tRNA(Gly) + AMP + diphosphate. Catalyzes the attachment of glycine to tRNA(Gly). The polypeptide is Glycine--tRNA ligase (Mycoplasma pneumoniae (strain ATCC 29342 / M129 / Subtype 1) (Mycoplasmoides pneumoniae)).